A 131-amino-acid polypeptide reads, in one-letter code: Large-conductance mechanosensitive channel (131 aa).

Helical transmembrane passes span 8-28, 30-50, and 67-87; these read FAVR…GAFG, IVSS…LGGI, and GAFL…FLFV.

This sequence belongs to the MscL family. In terms of assembly, homopentamer.

It localises to the cell membrane. Its function is as follows. Channel that opens in response to stretch forces in the membrane lipid bilayer. May participate in the regulation of osmotic pressure changes within the cell. This chain is Large-conductance mechanosensitive channel, found in Anoxybacillus flavithermus (strain DSM 21510 / WK1).